The following is a 557-amino-acid chain: Probable protein kinase UbiB (557 aa).

Positions 121–509 (AFDTTPLASA…RKLQTRVVTA (389 aa)) constitute a Protein kinase domain. ATP contacts are provided by residues 127-135 (LASASIAQV) and Lys-154. Asp-289 acts as the Proton acceptor in catalysis. The next 2 helical transmembrane spans lie at 506–526 (VVTAITGSGLLVVAAVLYGLH) and 535–555 (VPVWSWISGGAGSAALLIAWL).

Belongs to the ABC1 family. UbiB subfamily.

It is found in the cell inner membrane. It functions in the pathway cofactor biosynthesis; ubiquinone biosynthesis [regulation]. In terms of biological role, is probably a protein kinase regulator of UbiI activity which is involved in aerobic coenzyme Q (ubiquinone) biosynthesis. The sequence is that of Probable protein kinase UbiB from Xanthomonas campestris pv. campestris (strain B100).